A 194-amino-acid chain; its full sequence is Leucyl/phenylalanyl-tRNA--protein transferase (194 aa).

This sequence belongs to the L/F-transferase family.

The protein localises to the cytoplasm. It catalyses the reaction N-terminal L-lysyl-[protein] + L-leucyl-tRNA(Leu) = N-terminal L-leucyl-L-lysyl-[protein] + tRNA(Leu) + H(+). The catalysed reaction is N-terminal L-arginyl-[protein] + L-leucyl-tRNA(Leu) = N-terminal L-leucyl-L-arginyl-[protein] + tRNA(Leu) + H(+). It carries out the reaction L-phenylalanyl-tRNA(Phe) + an N-terminal L-alpha-aminoacyl-[protein] = an N-terminal L-phenylalanyl-L-alpha-aminoacyl-[protein] + tRNA(Phe). Functions in the N-end rule pathway of protein degradation where it conjugates Leu, Phe and, less efficiently, Met from aminoacyl-tRNAs to the N-termini of proteins containing an N-terminal arginine or lysine. The polypeptide is Leucyl/phenylalanyl-tRNA--protein transferase (Chlorobaculum tepidum (strain ATCC 49652 / DSM 12025 / NBRC 103806 / TLS) (Chlorobium tepidum)).